The primary structure comprises 1531 residues: Probable outer membrane protein PmpD (1531 aa).

The first 20 residues, 1–20, serve as a signal peptide directing secretion; the sequence is MSSEKDIKSTCSKFSLSVVA. Positions 1244-1531 constitute an Autotransporter domain; the sequence is EFDYSTNVWG…EANTGLRLIF (288 aa).

The protein belongs to the PMP outer membrane protein family.

The protein localises to the secreted. It localises to the cell wall. It is found in the cell outer membrane. The chain is Probable outer membrane protein PmpD (pmpD) from Chlamydia trachomatis serovar D (strain ATCC VR-885 / DSM 19411 / UW-3/Cx).